Reading from the N-terminus, the 1901-residue chain is A-kinase anchor protein 11 (1901 aa).

Phosphoserine is present on residues S18, S422, S433, S444, and S448. Positions 407-443 are disordered; it reads ALPANVRKPTPRKPESPYGNLCDAPDSPRPVKASRED. 2 disordered regions span residues 843-864 and 971-993; these read NPGN…SSSK and LPVS…DSQN. 2 positions are modified to phosphothreonine: T981 and T1100. Positions 1131–1153 are disordered; that stretch reads EFAPATPPSTPHNSSVGSLSENE. Residues 1141 to 1153 show a composition bias toward polar residues; it reads PHNSSVGSLSENE. Phosphoserine occurs at positions 1171, 1176, 1177, 1242, and 1337. A Phosphothreonine modification is found at T1485. A Phosphoserine modification is found at S1580. The interval 1650-1663 is PKA-RII subunit binding domain; it reads LAEKIVAEAIEKAE. The tract at residues 1708 to 1805 is disordered; sequence KEIEDFQSTE…HEDEVEGLGQ (98 aa). Residues 1713 to 1740 show a composition bias toward polar residues; it reads FQSTESVSSQQMNLSIGDDSTGSWSNLS. A compositionally biased stretch (basic and acidic residues) spans 1747–1756; the sequence is DESSSFHHLS. Residues 1757–1772 are compositionally biased toward low complexity; the sequence is ESNGNSSSWSSLGLEG. Residues 1787–1801 are compositionally biased toward acidic residues; sequence DGPDDKDEEHEDEVE.

Belongs to the AKAP110 family. Expressed in heart, brain, lung, liver, kidney, testis and ovary. Weakly expressed in skeletal muscle, pancreas and spleen.

The protein localises to the cytoplasm. The protein resides in the cytoskeleton. Its subcellular location is the microtubule organizing center. It is found in the centrosome. Functionally, binds to type II regulatory subunits of protein kinase A and anchors/targets them. In Homo sapiens (Human), this protein is A-kinase anchor protein 11 (AKAP11).